A 90-amino-acid polypeptide reads, in one-letter code: Large ribosomal subunit protein eL37 (90 aa).

Residues Cys-19, Cys-22, Cys-34, and Cys-37 each coordinate Zn(2+). Residues 19–37 (CRRCGRQSYHKQKNSCSSC) form a C4-type zinc finger. The span at 21–31 (RCGRQSYHKQK) shows a compositional bias: basic residues. A disordered region spans residues 21-59 (RCGRQSYHKQKNSCSSCGYPNPKMRNPGSIKARRRRTIG).

This sequence belongs to the eukaryotic ribosomal protein eL37 family. The cofactor is Zn(2+).

In terms of biological role, binds to the 23S rRNA. The polypeptide is Large ribosomal subunit protein eL37 (RPL37) (Encephalitozoon cuniculi (strain GB-M1) (Microsporidian parasite)).